Here is a 131-residue protein sequence, read N- to C-terminus: L-aspartate semialdehyde sulfurtransferase iron-sulfur subunit (131 aa).

4Fe-4S ferredoxin-type domains lie at 73-102 (KVIKRDLEKCVHCGCCITQCPINVIYMDED) and 103-131 (YNVVFKEEDCVGCKNCLKACPFKAIEIFE). [4Fe-4S] cluster-binding residues include Cys-82, Cys-85, Cys-88, Cys-92, Cys-112, Cys-115, Cys-118, and Cys-122.

May form a complex with MJ0100. The cofactor is [4Fe-4S] cluster.

The protein operates within amino-acid biosynthesis. Functionally, required for O-acetylhomoserine sulfhydrylase (OAHS)-independent homocysteine (Hcy) biosynthesis. Together with MJ0100, catalyzes the condensation of sulfide with aspartate semialdehyde to generate homocysteine. May be involved in the reduction of the disulfide formed in MJ0100. The protein is L-aspartate semialdehyde sulfurtransferase iron-sulfur subunit of Methanocaldococcus jannaschii (strain ATCC 43067 / DSM 2661 / JAL-1 / JCM 10045 / NBRC 100440) (Methanococcus jannaschii).